Here is a 91-residue protein sequence, read N- to C-terminus: RNA-binding protein Hfq (91 aa).

In terms of domain architecture, Sm spans 9-68 (DPFLNALRRERVPVSVYLVNGIKLQGTIESFDQFVVLLRNTVSQMVYKHAISTVVPARNV).

The protein belongs to the Hfq family. As to quaternary structure, homohexamer.

In terms of biological role, RNA chaperone that binds small regulatory RNA (sRNAs) and mRNAs to facilitate mRNA translational regulation in response to envelope stress, environmental stress and changes in metabolite concentrations. Also binds with high specificity to tRNAs. In Stenotrophomonas maltophilia (strain K279a), this protein is RNA-binding protein Hfq.